We begin with the raw amino-acid sequence, 1013 residues long: Ephrin type-A receptor 5 (1013 aa).

The signal sequence occupies residues 1–31 (MGLRGGGGRAGGPAPGWTCLLLCAALRSLLA). Residues 32–549 (SPGSEVNLLD…AASSDQSQIP (518 aa)) are Extracellular-facing. An Eph LBD domain is found at 36–214 (EVNLLDSRTV…YYKKCPSVIR (179 aa)). Asparagine 240, asparagine 275, asparagine 345, asparagine 399, asparagine 412, and asparagine 437 each carry an N-linked (GlcNAc...) asparagine glycan. Fibronectin type-III domains follow at residues 333 to 443 (PPSA…TNQA) and 444 to 538 (APSP…TSPV). The helical transmembrane segment at 550–570 (IIVVSVTVGVILLAVVIGFLL) threads the bilayer. The Cytoplasmic portion of the chain corresponds to 571–1013 (SGSCCDHGCG…VQLVNGMVPL (443 aa)). A phosphotyrosine; by autocatalysis mark is found at tyrosine 626 and tyrosine 632. The region spanning 651-912 (ITIERVIGAG…EIVSMLDKLI (262 aa)) is the Protein kinase domain. Residues 657–665 (IGAGEFGEV) and lysine 683 contribute to the ATP site. Aspartate 776 acts as the Proton acceptor in catalysis. Phosphotyrosine; by autocatalysis is present on residues tyrosine 809 and tyrosine 958. The SAM domain maps to 941 to 1013 (GAYRSVGEWL…VQLVNGMVPL (73 aa)). Residues 1011-1013 (VPL) carry the PDZ-binding motif.

Belongs to the protein kinase superfamily. Tyr protein kinase family. Ephrin receptor subfamily. In terms of assembly, heterotetramer upon binding of the ligand. The heterotetramer is composed of an ephrin dimer and a receptor dimer. Oligomerization is probably required to induce biological responses. In terms of processing, phosphorylated. Phosphorylation is stimulated by the ligand EFNA5. In terms of tissue distribution, detected in the 10-day embryonic brain, weaker expression in the rest of the 10-day embryo. Undetected in adult tissues.

Its subcellular location is the cell membrane. It localises to the cell projection. It is found in the axon. The protein resides in the dendrite. It catalyses the reaction L-tyrosyl-[protein] + ATP = O-phospho-L-tyrosyl-[protein] + ADP + H(+). Its function is as follows. Receptor tyrosine kinase which binds promiscuously GPI-anchored ephrin-A family ligands residing on adjacent cells, leading to contact-dependent bidirectional signaling into neighboring cells. The signaling pathway downstream of the receptor is referred to as forward signaling while the signaling pathway downstream of the ephrin ligand is referred to as reverse signaling. Among GPI-anchored ephrin-A ligands, EFNA5 most probably constitutes the cognate/functional ligand for EPHA5. Functions as an axon guidance molecule during development and may be involved in the development of the retinotectal, entorhino-hippocampal and hippocamposeptal pathways. Together with EFNA5 plays also a role in synaptic plasticity in adult brain through regulation of synaptogenesis. In Gallus gallus (Chicken), this protein is Ephrin type-A receptor 5 (EPHA5).